The primary structure comprises 94 residues: Large ribosomal subunit protein uL23 (94 aa).

Belongs to the universal ribosomal protein uL23 family. In terms of assembly, part of the 50S ribosomal subunit. Contacts protein L29, and trigger factor when it is bound to the ribosome.

Its function is as follows. One of the early assembly proteins it binds 23S rRNA. One of the proteins that surrounds the polypeptide exit tunnel on the outside of the ribosome. Forms the main docking site for trigger factor binding to the ribosome. The polypeptide is Large ribosomal subunit protein uL23 (Geobacter sp. (strain M21)).